The chain runs to 436 residues: 3-ketoacyl-CoA thiolase (436 aa).

Cys-99 acts as the Acyl-thioester intermediate in catalysis. Active-site proton acceptor residues include His-392 and Cys-422.

The protein belongs to the thiolase-like superfamily. Thiolase family. As to quaternary structure, heterotetramer of two alpha chains (FadJ) and two beta chains (FadI).

The protein localises to the cytoplasm. The enzyme catalyses an acyl-CoA + acetyl-CoA = a 3-oxoacyl-CoA + CoA. It participates in lipid metabolism; fatty acid beta-oxidation. Functionally, catalyzes the final step of fatty acid oxidation in which acetyl-CoA is released and the CoA ester of a fatty acid two carbons shorter is formed. The sequence is that of 3-ketoacyl-CoA thiolase from Escherichia coli (strain ATCC 8739 / DSM 1576 / NBRC 3972 / NCIMB 8545 / WDCM 00012 / Crooks).